Reading from the N-terminus, the 308-residue chain is Ornithine carbamoyltransferase (308 aa).

Carbamoyl phosphate contacts are provided by residues 56–59 (STRT), Gln-83, Arg-107, and 134–137 (HPCQ). L-ornithine contacts are provided by residues Asn-165, Asp-225, and 229 to 230 (SM). Carbamoyl phosphate-binding positions include 266–267 (CL) and Arg-294.

The protein belongs to the aspartate/ornithine carbamoyltransferase superfamily. OTCase family.

The protein resides in the cytoplasm. The catalysed reaction is carbamoyl phosphate + L-ornithine = L-citrulline + phosphate + H(+). It functions in the pathway amino-acid biosynthesis; L-arginine biosynthesis; L-arginine from L-ornithine and carbamoyl phosphate: step 1/3. In terms of biological role, reversibly catalyzes the transfer of the carbamoyl group from carbamoyl phosphate (CP) to the N(epsilon) atom of ornithine (ORN) to produce L-citrulline. This is Ornithine carbamoyltransferase from Cereibacter sphaeroides (strain ATCC 17029 / ATH 2.4.9) (Rhodobacter sphaeroides).